Consider the following 153-residue polypeptide: Probable histone H2A.4 (153 aa).

Basic residues predominate over residues 1-12; that stretch reads MDSGTKVKKGAA. 2 disordered regions span residues 1–30 and 129–153; these read MDSG…RSVK and KSEK…PKKS. Positions 133–147 are enriched in low complexity; the sequence is AASTTKTPKSPSKAT. Residues 149-152 carry the SPKK motif motif; sequence SPKK.

The protein belongs to the histone H2A family. In terms of assembly, the nucleosome is a histone octamer containing two molecules each of H2A, H2B, H3 and H4 assembled in one H3-H4 heterotetramer and two H2A-H2B heterodimers. The octamer wraps approximately 147 bp of DNA. Post-translationally, not ubiquitinated.

It is found in the nucleus. The protein resides in the chromosome. Core component of nucleosome. Nucleosomes wrap and compact DNA into chromatin, limiting DNA accessibility to the cellular machineries which require DNA as a template. Histones thereby play a central role in transcription regulation, DNA repair, DNA replication and chromosomal stability. DNA accessibility is regulated via a complex set of post-translational modifications of histones, also called histone code, and nucleosome remodeling. This chain is Probable histone H2A.4, found in Arabidopsis thaliana (Mouse-ear cress).